A 662-amino-acid polypeptide reads, in one-letter code: Polyunsaturated fatty acid lipoxygenase ALOX15 (662 aa).

Positions 2-114 constitute a PLAT domain; it reads GLYRIRVSTG…VLSLPEGTGR (113 aa). The Lipoxygenase domain occupies 115 to 662; it reads TVGDDPQGLF…PSIVENSVAI (548 aa). Positions 360, 365, 540, 544, and 662 each coordinate Fe cation.

This sequence belongs to the lipoxygenase family. In terms of assembly, interacts with PEBP1; in response to IL13/interleukin-13, prevents the interaction of PEBP1 with RAF1 to activate the ERK signaling cascade. Requires Fe cation as cofactor.

Its subcellular location is the cytoplasm. It localises to the cytosol. The protein localises to the cell membrane. It is found in the lipid droplet. It catalyses the reaction (5Z,8Z,11Z,14Z)-eicosatetraenoate + O2 = (12S)-hydroperoxy-(5Z,8Z,10E,14Z)-eicosatetraenoate. It carries out the reaction (9Z,12Z)-octadecadienoate + O2 = (13S)-hydroperoxy-(9Z,11E)-octadecadienoate. The catalysed reaction is (5Z,8Z,11Z,14Z)-eicosatetraenoate + O2 = (15S)-hydroperoxy-(5Z,8Z,11Z,13E)-eicosatetraenoate. The enzyme catalyses (5Z,8Z,11Z,14Z)-eicosatetraenoate + 2 O2 = (14R,15S)-dihydroperoxy-(5Z,8Z,10E,12E)-eicosatetraenoate. It catalyses the reaction (5Z,8Z,11Z,14Z)-eicosatetraenoate + 2 O2 = (8S,15S)-dihydroperoxy-(5Z,9E,11Z,13E)-eicosatetraenoate. It carries out the reaction (14S,15R)-epoxy-(5Z,8Z,11Z)-eicosatrienoate + O2 = (8S)-hydroperoxy-(14S,15R)-epoxy-(5Z,9E,11Z)-eicosatrienoate. The catalysed reaction is (14S,15R)-epoxy-(5Z,8Z,11Z)-eicosatrienoate + O2 = (12S)-hydroperoxy-(14S,15R)-epoxy-(5Z,8Z,10E)-eicosatrienoate. The enzyme catalyses (14R,15S)-epoxy-(5Z,8Z,11Z)-eicosatrienoate + O2 = (5S)-hydroperoxy-(14R,15S)-epoxy-(6E,8Z,11Z)-eicosatrienoate. It catalyses the reaction (14R,15S)-epoxy-(5Z,8Z,11Z)-eicosatrienoate + O2 = (12S)-hydroperoxy-(14R,15S)-epoxy-(5Z,8Z,10E)-eicosatrienoate. It carries out the reaction (15R)-hydroperoxy-(5Z,8Z,11Z,13E)-eicosatetraenoate = 15-oxo-(5Z,8Z,11Z,13E)-eicosatetraenoate + H2O. The catalysed reaction is (15S)-hydroperoxy-(5Z,8Z,11Z,13E)-eicosatetraenoate = (14S,15S)-epoxy-(5Z,8Z,10E,12E)-eicosatetraenoate + H2O. The enzyme catalyses (12S)-hydroperoxy-(5Z,8Z,10E,14Z)-eicosatetraenoate = (8S)-hydroxy-(11S,12S)-epoxy-(5Z,9E,14Z)-eicosatrienoate. It catalyses the reaction (4Z,7Z,10Z,13Z,16Z)-docosapentaenoate + O2 = 14-hydroperoxy-(4Z,7Z,10Z,12E,16Z)-docosapentaenoate. It carries out the reaction (7Z,10Z,13Z,16Z,19Z)-docosapentaenoate + O2 = 14-hydroperoxy-(7Z,10Z,12E,16Z,19Z)-docosapentaenoate. The catalysed reaction is (4Z,7Z,10Z,13Z,16Z,19Z)-docosahexaenoate + O2 = (14S)-hydroperoxy-(4Z,7Z,10Z,12E,16Z,19Z)-docosahexaenoate. The enzyme catalyses (4Z,7Z,10Z,13Z,16Z,19Z)-docosahexaenoate + O2 = (17S)-hydroperoxy-(4Z,7Z,10Z,13Z,15E,19Z)-docosahexaenoate. It catalyses the reaction (7S)-hydroperoxy-(4Z,8E,10Z,13Z,16Z,19Z)-docosahexaenoate + O2 = (7S,14S)-dihydroperoxy-(4Z,8E,10Z,12E,16Z,19Z)-docosahexaenoate. It carries out the reaction (7S)-hydroperoxy-(4Z,8E,10Z,13Z,16Z,19Z)-docosahexaenoate + O2 = (7S,17S)-dihydroperoxy-(4Z,8E,10Z,13Z,15E,19Z)-docosahexaenoate. The catalysed reaction is (4Z,7Z,10Z,13Z,16Z,19Z)-docosahexaenoate + O2 = (11S)-hydroperoxy-(4Z,7Z,9E,13Z,16Z,19Z)-docosahexaenoate. The enzyme catalyses N-(5Z,8Z,11Z,14Z)-eicosatetraenoyl-taurine + O2 = N-(12S)-hydroperoxy-(5Z,8Z,10E,14Z)-eicosatetraenoyl-taurine. It catalyses the reaction N-(5Z,8Z,11Z,14Z)-eicosatetraenoyl-gamma-aminobutanoate + O2 = N-(12S)-hydroperoxy-(5Z,8Z,10E,14Z)-eicosatetraenoyl-gamma-aminobutanoate. It carries out the reaction N-(5Z,8Z,11Z,14Z)-eicosatetraenoyl-glycine + O2 = N-(12S)-hydroperoxy-(5Z,8Z,10E,14Z)-eicosatetraenoyl-glycine. The catalysed reaction is N-(5Z,8Z,11Z,14Z)-eicosatetraenoyl-L-alanine + O2 = N-(12S)-hydroperoxy-(5Z,8Z,10E,14Z)-eicosatetraenoyl-alanine. The enzyme catalyses N-(5Z,8Z,11Z,14Z)-eicosatetraenoyl-taurine + O2 = N-(15S)-hydroperoxy-(5Z,8Z,11Z,13E)-eicosatetraenoyl-taurine. It catalyses the reaction N-(5Z,8Z,11Z,14Z)-eicosatetraenoyl-gamma-aminobutanoate + O2 = N-(15S)-hydroperoxy-(5Z,8Z,11Z,13E)-eicosatetraenoyl-gamma-aminobutanoate. It carries out the reaction N-(5Z,8Z,11Z,14Z)-eicosatetraenoyl-glycine + O2 = N-(15S)-hydroperoxy-(5Z,8Z,11Z,13E)-eicosatetraenoyl-glycine. The catalysed reaction is N-(5Z,8Z,11Z,14Z)-eicosatetraenoyl-L-alanine + O2 = N-(15S)-hydroperoxy-(5Z,8Z,11Z,13E)-eicosatetraenoyl-alanine. It functions in the pathway lipid metabolism; hydroperoxy eicosatetraenoic acid biosynthesis. Functionally, non-heme iron-containing dioxygenase that catalyzes the stereo-specific peroxidation of free and esterified polyunsaturated fatty acids generating a spectrum of bioactive lipid mediators. It inserts peroxyl groups at C12 or C15 of arachidonate ((5Z,8Z,11Z,14Z)-eicosatetraenoate) producing both 12-hydroperoxyeicosatetraenoate/12-HPETE and 15-hydroperoxyeicosatetraenoate/15-HPETE. It may then act on 12-HPETE to produce hepoxilins, which may show pro-inflammatory properties. Can also peroxidize linoleate ((9Z,12Z)-octadecadienoate) to 13-hydroperoxyoctadecadienoate. May participate in the sequential oxidations of DHA ((4Z,7Z,10Z,13Z,16Z,19Z)-docosahexaenoate) to generate specialized pro-resolving mediators (SPMs)like resolvin D5 ((7S,17S)-diHPDHA) and (7S,14S)-diHPDHA, that actively down-regulate the immune response and have anti-aggregation properties with platelets. Can convert epoxy fatty acids to hydroperoxy-epoxides derivatives followed by an intramolecular nucleophilic substitution leading to the formation of monocyclic endoperoxides. Plays an important role during the maintenance of self-tolerance by peroxidizing membrane-bound phosphatidylethanolamine which can then signal the sorting process for clearance of apoptotic cells during inflammation and prevent an autoimmune response. In addition to its role in the immune and inflammatory responses, this enzyme may play a role in epithelial wound healing in the cornea through production of lipoxin A4 (LXA(4)) and docosahexaenoic acid-derived neuroprotectin D1 (NPD1; 10R,17S-HDHA), both lipid autacoids exhibit anti-inflammatory and neuroprotective properties. Furthermore, it may regulate actin polymerization which is crucial for several biological processes such as the phagocytosis of apoptotic cells. It is also implicated in the generation of endogenous ligands for peroxisome proliferator activated receptor (PPAR-gamma), hence modulating macrophage development and function. It may also exert a negative effect on skeletal development by regulating bone mass through this pathway. As well as participates in ER stress and downstream inflammation in adipocytes, pancreatic islets, and liver. Finally, it is also involved in the cellular response to IL13/interleukin-13. The polypeptide is Polyunsaturated fatty acid lipoxygenase ALOX15 (Pongo abelii (Sumatran orangutan)).